The primary structure comprises 198 residues: Small ribosomal subunit protein uS4 (198 aa).

Positions 88 to 153 (LRLDNVMFRM…AQRYKDILEV (66 aa)) constitute an S4 RNA-binding domain.

This sequence belongs to the universal ribosomal protein uS4 family. Part of the 30S ribosomal subunit. Contacts protein S5. The interaction surface between S4 and S5 is involved in control of translational fidelity.

Its function is as follows. One of the primary rRNA binding proteins, it binds directly to 16S rRNA where it nucleates assembly of the body of the 30S subunit. With S5 and S12 plays an important role in translational accuracy. This is Small ribosomal subunit protein uS4 from Lachnoclostridium phytofermentans (strain ATCC 700394 / DSM 18823 / ISDg) (Clostridium phytofermentans).